The sequence spans 92 residues: Large ribosomal subunit protein bL27 (92 aa).

A disordered region spans residues 1-21; it reads MSKKKGVGSSRNGRDSESKRL. Residues 12 to 21 show a composition bias toward basic and acidic residues; that stretch reads NGRDSESKRL.

It belongs to the bacterial ribosomal protein bL27 family.

The protein is Large ribosomal subunit protein bL27 of Halothermothrix orenii (strain H 168 / OCM 544 / DSM 9562).